The primary structure comprises 163 residues: NADH-quinone oxidoreductase subunit I (163 aa).

4Fe-4S ferredoxin-type domains follow at residues 54-84 (LRRY…IDSA) and 94-123 (TRYD…ETHI). Cysteine 64, cysteine 67, cysteine 70, cysteine 74, cysteine 103, cysteine 106, cysteine 109, and cysteine 113 together coordinate [4Fe-4S] cluster.

The protein belongs to the complex I 23 kDa subunit family. In terms of assembly, NDH-1 is composed of 14 different subunits. Subunits NuoA, H, J, K, L, M, N constitute the membrane sector of the complex. It depends on [4Fe-4S] cluster as a cofactor.

The protein resides in the cell inner membrane. The enzyme catalyses a quinone + NADH + 5 H(+)(in) = a quinol + NAD(+) + 4 H(+)(out). Its function is as follows. NDH-1 shuttles electrons from NADH, via FMN and iron-sulfur (Fe-S) centers, to quinones in the respiratory chain. The immediate electron acceptor for the enzyme in this species is believed to be ubiquinone. Couples the redox reaction to proton translocation (for every two electrons transferred, four hydrogen ions are translocated across the cytoplasmic membrane), and thus conserves the redox energy in a proton gradient. The chain is NADH-quinone oxidoreductase subunit I from Xylella fastidiosa (strain 9a5c).